The sequence spans 488 residues: Spermatogenesis-associated protein 6 (488 aa).

The N-terminal stretch at 1–17 (MPKVKALQCALALEIRS) is a signal peptide. Residues 176–225 (HGRLQCRTSRSQKKKSKSPERSKYCINTKNYEQPTISSKSHSPSPYTKRR) form a disordered region. The span at 200-220 (CINTKNYEQPTISSKSHSPSP) shows a compositional bias: polar residues. Serine 217 and serine 219 each carry phosphoserine. Lysine 248 participates in a covalent cross-link: Glycyl lysine isopeptide (Lys-Gly) (interchain with G-Cter in SUMO2). A phosphoserine mark is found at serine 265, serine 274, serine 325, serine 343, serine 346, serine 354, serine 424, serine 465, and serine 487.

This sequence belongs to the SPATA6 family. In terms of assembly, interacts with MYL6. Specifically expressed in developing spermatids and mature spermatozoa (at protein level). Isoform 1 is weakly expressed in testis, ovary, thymus and placenta. Isoform 2 and isoform 3 are testis-specific. Expression isw higher in spermatids than in spermatocytes and spermatogonia.

It is found in the secreted. The protein resides in the cell projection. It localises to the cilium. The protein localises to the flagellum. Its function is as follows. Required for formation of the sperm connecting piece during spermiogenesis. Sperm connecting piece is essential for linking the developing flagellum to the head during late spermiogenesis. May be involved in myosin-based microfilament transport through interaction with myosin subunits. The chain is Spermatogenesis-associated protein 6 from Mus musculus (Mouse).